Here is a 359-residue protein sequence, read N- to C-terminus: tRNA-specific 2-thiouridylase MnmA (359 aa).

ATP is bound by residues 9–16 and Met-35; that span reads GMSGGVDS. Cys-104 functions as the Nucleophile in the catalytic mechanism. Cys-104 and Cys-200 form a disulfide bridge. An ATP-binding site is contributed by Gly-128. An interaction with tRNA region spans residues 150–152; sequence KDQ. Cys-200 (cysteine persulfide intermediate) is an active-site residue. Positions 306-307 are interaction with tRNA; it reads RY.

This sequence belongs to the MnmA/TRMU family.

The protein resides in the cytoplasm. It catalyses the reaction S-sulfanyl-L-cysteinyl-[protein] + uridine(34) in tRNA + AH2 + ATP = 2-thiouridine(34) in tRNA + L-cysteinyl-[protein] + A + AMP + diphosphate + H(+). Catalyzes the 2-thiolation of uridine at the wobble position (U34) of tRNA, leading to the formation of s(2)U34. This is tRNA-specific 2-thiouridylase MnmA from Clostridium perfringens (strain ATCC 13124 / DSM 756 / JCM 1290 / NCIMB 6125 / NCTC 8237 / Type A).